Reading from the N-terminus, the 61-residue chain is Probable tautomerase lmo2564 (61 aa).

Pro2 serves as the catalytic Proton acceptor; via imino nitrogen.

Belongs to the 4-oxalocrotonate tautomerase family.

This Listeria monocytogenes serovar 1/2a (strain ATCC BAA-679 / EGD-e) protein is Probable tautomerase lmo2564.